Here is a 1461-residue protein sequence, read N- to C-terminus: Periaxin (1461 aa).

At Ser-7 the chain carries Phosphoserine. In terms of domain architecture, PDZ spans Leu-16 to Thr-99. The Nuclear export signal motif lies at Val-70–Leu-84. Positions Lys-118–Arg-196 match the Nuclear localization signal motif. Ser-133 is modified (phosphoserine). Tandem repeats lie at residues Gly-431–Lys-435, Gly-439–Lys-443, Ala-447–Lys-451, Val-455–Ala-459, Val-463–Glu-467, Val-468–Lys-472, Val-473–Lys-477, Val-481–Ala-485, Val-486–Arg-490, Val-494–Lys-498, Val-499–Lys-503, Val-507–Ala-511, Val-512–Arg-516, Val-520–Lys-524, Val-525–Lys-529, Val-533–Ala-537, Val-538–Arg-542, Val-546–Lys-550, Val-551–Lys-555, Val-559–Ala-563, Val-564–Arg-568, Val-572–Lys-576, Val-577–Lys-581, Val-582–Lys-586, Val-590–Lys-594, Leu-595–Lys-599, Leu-600–Gln-604, Val-608–Ala-612, Val-613–His-617, Leu-618–Gln-622, Val-626–Lys-630, Leu-631–Lys-635, Leu-636–Lys-640, Val-644–Ala-648, Val-649–His-653, Leu-654–Gln-658, Val-662–Lys-666, Met-670–Ala-674, Val-675–Arg-679, Val-683–Lys-687, Val-688–Lys-692, Val-696–Ala-700, Val-701–His-705, Leu-706–Gln-710, Val-714–Lys-718, Val-719–Lys-723, Leu-724–Lys-728, Val-732–Ala-736, Val-737–His-741, Leu-742–Gln-746, Val-750–Arg-754, Leu-755–Gln-759, Val-760–Pro-764, Ala-771–Lys-775, and Ala-779–Gln-783. Positions Gly-431–Gln-783 are 55 X 5 AA approximate tandem repeats of [LVMAG]-[PSREQC]-[EDKL]-[LIVMAP]-[AQKHRPE]; that may have a tripeptide spacer of [LV]-P-[KER]. 2 positions are modified to phosphoserine: Ser-900 and Ser-1082. The segment covering Glu-1318 to Lys-1327 has biased composition (basic and acidic residues). A disordered region spans residues Glu-1318–Val-1461. 6 positions are modified to phosphoserine: Ser-1349, Ser-1351, Ser-1363, Ser-1401, Ser-1407, and Ser-1439. A compositionally biased stretch (acidic residues) spans Pro-1352–Ser-1363.

This sequence belongs to the periaxin family. Homodimer (via PDZ domain). Interacts with SCN10A. Found in a complex with SCN10A. Interacts with DRP2. Identified in a dystroglycan complex that contains at least PRX, DRP2, UTRN, DMD and DAG1. Detected in a complex composed of at least EZR, AHNAK, PPL and PRX. Identified in a complex with EZR, AHNAK, BFSP1, BFSP2, ANK2, PLEC, VIM and spectrin. Detected in spinal cord. Isoform 1 and isoform 2 are found in sciatic nerve and Schwann cells.

Its subcellular location is the cell membrane. It localises to the nucleus. It is found in the cytoplasm. The protein localises to the cell junction. Functionally, scaffolding protein that functions as part of a dystroglycan complex in Schwann cells, and as part of EZR and AHNAK-containing complexes in eye lens fiber cells. Required for the maintenance of the peripheral myelin sheath that is essential for normal transmission of nerve impulses and normal perception of sensory stimuli. Required for normal transport of MBP mRNA from the perinuclear to the paranodal regions. Required for normal remyelination after nerve injury. Required for normal elongation of Schwann cells and normal length of the internodes between the nodes of Ranvier. The demyelinated nodes of Ranvier permit saltatory transmission of nerve impulses; shorter internodes cause slower transmission of nerve impulses. Required for the formation of appositions between the abaxonal surface of the myelin sheath and the Schwann cell plasma membrane; the Schwann cell cytoplasm is restricted to regions between these appositions. Required for the formation of Cajal bands and of Schmidt-Lanterman incisures that correspond to short, cytoplasm-filled regions on myelinated nerves. Recruits DRP2 to the Schwann cell plasma membrane. Required for normal protein composition of the eye lens fiber cell plasma membrane and normal eye lens fiber cell morphology. The protein is Periaxin (PRX) of Homo sapiens (Human).